Reading from the N-terminus, the 446-residue chain is Adenylosuccinate synthetase (446 aa).

GTP-binding positions include 21–27 and 49–51; these read GDEGKGK and GHT. The active-site Proton acceptor is the Asp22. Residues Asp22 and Gly49 each contribute to the Mg(2+) site. Residues 22 to 25, 47 to 50, Thr141, Arg155, Gln236, Thr251, and Arg319 contribute to the IMP site; these read DEGK and NAGH. His50 functions as the Proton donor in the catalytic mechanism. 315-321 contacts substrate; sequence VTTGRSR. GTP is bound by residues Arg321, 347–349, and 429–431; these read KLD and STS.

Belongs to the adenylosuccinate synthetase family. As to quaternary structure, homodimer. Requires Mg(2+) as cofactor.

Its subcellular location is the cytoplasm. The catalysed reaction is IMP + L-aspartate + GTP = N(6)-(1,2-dicarboxyethyl)-AMP + GDP + phosphate + 2 H(+). Its pathway is purine metabolism; AMP biosynthesis via de novo pathway; AMP from IMP: step 1/2. Plays an important role in the de novo pathway of purine nucleotide biosynthesis. Catalyzes the first committed step in the biosynthesis of AMP from IMP. The protein is Adenylosuccinate synthetase of Polaromonas sp. (strain JS666 / ATCC BAA-500).